The following is a 465-amino-acid chain: GTPase Der (465 aa).

2 EngA-type G domains span residues 3–166 and 184–358; these read FLVA…LNEY and IHFS…ACAN. Residues 9 to 16, 56 to 60, 118 to 121, 190 to 197, 237 to 241, and 302 to 305 each bind GTP; these read GRANVGKS, DTGGI, NKVD, GRPNVGKS, DTAGV, and NKWD. The region spanning 359 to 443 is the KH-like domain; the sequence is KKITTADATR…PIVFEFKQSE (85 aa). The interval 446–465 is disordered; that stretch reads FADRKNKRSKDEGSKSKKVK.

This sequence belongs to the TRAFAC class TrmE-Era-EngA-EngB-Septin-like GTPase superfamily. EngA (Der) GTPase family. Associates with the 50S ribosomal subunit.

GTPase that plays an essential role in the late steps of ribosome biogenesis. The protein is GTPase Der of Francisella tularensis subsp. tularensis (strain WY96-3418).